The chain runs to 408 residues: Peptidase T (408 aa).

H78 lines the Zn(2+) pocket. D80 is a catalytic residue. D140 contacts Zn(2+). The active-site Proton acceptor is the E173. E174, D196, and H379 together coordinate Zn(2+).

Belongs to the peptidase M20B family. It depends on Zn(2+) as a cofactor.

Its subcellular location is the cytoplasm. It catalyses the reaction Release of the N-terminal residue from a tripeptide.. Functionally, cleaves the N-terminal amino acid of tripeptides. The polypeptide is Peptidase T (Escherichia coli (strain UTI89 / UPEC)).